The chain runs to 277 residues: Ribonuclease HII (277 aa).

The RNase H type-2 domain maps to 20–250 (KLIIGLDEAG…SKKLLKKIED (231 aa)). Asp-26, Glu-27, and Asp-141 together coordinate a divalent metal cation.

The protein belongs to the RNase HII family. The cofactor is Mn(2+). Requires Mg(2+) as cofactor.

Its subcellular location is the cytoplasm. The enzyme catalyses Endonucleolytic cleavage to 5'-phosphomonoester.. Endonuclease that specifically degrades the RNA of RNA-DNA hybrids. This is Ribonuclease HII from Methanococcus aeolicus (strain ATCC BAA-1280 / DSM 17508 / OCM 812 / Nankai-3).